The primary structure comprises 867 residues: Respiratory burst oxidase homolog protein B (867 aa).

Over residues M1–R13 the composition is skewed to basic and acidic residues. Positions M1–S20 are disordered. The Cytoplasmic segment spans residues M1–R322. Phosphoserine; by CPK is present on residues S82 and S97. EF-hand-like stretches follow at residues A141–S149 and R175–E186. EF-hand domains lie at S198–A233 and N242–H277. Residues D211, D213, D215, R217, and E222 each contribute to the Ca(2+) site. Residues I323 to Q343 traverse the membrane as a helical segment. Residues Y344–S358 lie on the Extracellular side of the membrane. The helical transmembrane segment at V359 to C379 threads the bilayer. A Ferric oxidoreductase domain is found at K361–I519. The Cytoplasmic segment spans residues R380–V407. The helical transmembrane segment at I408 to F428 threads the bilayer. Over P429–G463 the chain is Extracellular. A helical transmembrane segment spans residues W464 to F484. At R485–Y506 the chain is on the cytoplasmic side. The chain crosses the membrane as a helical span at residues S507 to L527. Residues S528–D686 lie on the Extracellular side of the membrane. Positions S558–D681 constitute an FAD-binding FR-type domain. Residues V687–V707 form a helical membrane-spanning segment. The Cytoplasmic segment spans residues L708–F867.

The protein belongs to the RBOH (TC 5.B.1.3) family. As to quaternary structure, monomer and homodimer. Post-translationally, phosphorylation at Ser-82 and Ser-97 is required for full activity of RBOHB. Not phosphorylated at Ser-89. Phosphorylation at Ser-82 is induced by fungal elicitor treatment.

The protein resides in the cell membrane. Inhibited by diphenylene iodinium (DPI). Its function is as follows. Calcium-dependent NADPH oxidase that generates superoxide. Involved in the massive phase II oxidative burst induced by pathogen infection. This chain is Respiratory burst oxidase homolog protein B (RBOHB), found in Solanum tuberosum (Potato).